Consider the following 500-residue polypeptide: NAD(P)H-quinone oxidoreductase chain 4, chloroplastic (500 aa).

Transmembrane regions (helical) follow at residues 4–24 (FPWL…IFFL), 35–55 (YTIC…CYHF), 87–107 (IGPV…AWPV), 113–130 (LFHF…GSFS), 134–154 (LLLF…LLSM), 167–187 (FILY…GVGL), 207–227 (VALE…KLPI), 242–262 (HYST…YGLI), 272–292 (AHSI…IYAA), 305–325 (IAYS…SITD), 330–350 (GAIL…FLAG), 386–406 (LALP…GIIT), 416–436 (IVIT…LLSM), and 462–482 (LFVS…PDFV).

It belongs to the complex I subunit 4 family.

It localises to the plastid. The protein resides in the chloroplast thylakoid membrane. It carries out the reaction a plastoquinone + NADH + (n+1) H(+)(in) = a plastoquinol + NAD(+) + n H(+)(out). The catalysed reaction is a plastoquinone + NADPH + (n+1) H(+)(in) = a plastoquinol + NADP(+) + n H(+)(out). This chain is NAD(P)H-quinone oxidoreductase chain 4, chloroplastic, found in Guizotia abyssinica (Niger).